The following is a 177-amino-acid chain: Large ribosomal subunit protein uL6 (177 aa).

Positions 154-171 (PEPYKGKGVRYADEQVRR) are enriched in basic and acidic residues. Positions 154 to 177 (PEPYKGKGVRYADEQVRRKEAKKK) are disordered.

It belongs to the universal ribosomal protein uL6 family. Part of the 50S ribosomal subunit.

This protein binds to the 23S rRNA, and is important in its secondary structure. It is located near the subunit interface in the base of the L7/L12 stalk, and near the tRNA binding site of the peptidyltransferase center. The polypeptide is Large ribosomal subunit protein uL6 (Marinobacter nauticus (strain ATCC 700491 / DSM 11845 / VT8) (Marinobacter aquaeolei)).